Reading from the N-terminus, the 463-residue chain is Ribulose bisphosphate carboxylase (463 aa).

Residue asparagine 116 coordinates substrate. Lysine 171 functions as the Proton acceptor in the catalytic mechanism. Lysine 173 provides a ligand contact to substrate. The Mg(2+) site is built by lysine 196, aspartate 198, and glutamate 199. Lysine 196 bears the N6-carboxylysine mark. The Proton acceptor role is filled by histidine 294. Substrate is bound by residues arginine 295, histidine 328, and serine 375.

This sequence belongs to the RuBisCO large chain family. Type II subfamily. In terms of assembly, homodimer. Mg(2+) is required as a cofactor.

The catalysed reaction is 2 (2R)-3-phosphoglycerate + 2 H(+) = D-ribulose 1,5-bisphosphate + CO2 + H2O. It carries out the reaction D-ribulose 1,5-bisphosphate + O2 = 2-phosphoglycolate + (2R)-3-phosphoglycerate + 2 H(+). RuBisCO catalyzes two reactions: the carboxylation of D-ribulose 1,5-bisphosphate, the primary event in carbon dioxide fixation, as well as the oxidative fragmentation of the pentose substrate. Both reactions occur simultaneously and in competition at the same active site. The chain is Ribulose bisphosphate carboxylase from Hydrogenovibrio marinus.